Consider the following 496-residue polypeptide: UDP-glycosyltransferase 73C3 (496 aa).

Residues Ser297, 357–359 (APQ), 374–382 (HCGWNSTLE), and 396–399 (FGDQ) each bind UDP-alpha-D-glucose.

Belongs to the UDP-glycosyltransferase family.

The polypeptide is UDP-glycosyltransferase 73C3 (UGT73C3) (Arabidopsis thaliana (Mouse-ear cress)).